The following is a 580-amino-acid chain: Arginine--tRNA ligase (580 aa).

Residues 131–141 (ANPTGPLHVGH) carry the 'HIGH' region motif.

Belongs to the class-I aminoacyl-tRNA synthetase family. Monomer.

The protein resides in the cytoplasm. It carries out the reaction tRNA(Arg) + L-arginine + ATP = L-arginyl-tRNA(Arg) + AMP + diphosphate. This chain is Arginine--tRNA ligase, found in Ruegeria sp. (strain TM1040) (Silicibacter sp.).